Here is a 142-residue protein sequence, read N- to C-terminus: Nucleoside diphosphate kinase (142 aa).

Residues K9, F57, R85, T91, R102, and N112 each contribute to the ATP site. The interval 87-106 (AMGATDPAKSEKGTVRGDLG) is disordered. H115 acts as the Pros-phosphohistidine intermediate in catalysis.

Belongs to the NDK family. As to quaternary structure, homotetramer. It depends on Mg(2+) as a cofactor.

The protein localises to the cytoplasm. The catalysed reaction is a 2'-deoxyribonucleoside 5'-diphosphate + ATP = a 2'-deoxyribonucleoside 5'-triphosphate + ADP. It carries out the reaction a ribonucleoside 5'-diphosphate + ATP = a ribonucleoside 5'-triphosphate + ADP. In terms of biological role, major role in the synthesis of nucleoside triphosphates other than ATP. The ATP gamma phosphate is transferred to the NDP beta phosphate via a ping-pong mechanism, using a phosphorylated active-site intermediate. This Dehalococcoides mccartyi (strain ATCC BAA-2266 / KCTC 15142 / 195) (Dehalococcoides ethenogenes (strain 195)) protein is Nucleoside diphosphate kinase.